The following is a 69-amino-acid chain: Dermaseptin-H3 (69 aa).

The signal sequence occupies residues 1–22; it reads MAFLKKSLFLVLFLGMVSLSIC. Residues 23-43 constitute a propeptide that is removed on maturation; it reads EEEKRENEDEEKQEDDEQSEM. A disordered region spans residues 24–44; that stretch reads EEKRENEDEEKQEDDEQSEMK. Acidic residues predominate over residues 30–40; it reads EDEEKQEDDEQ. Residue Leu66 is modified to Leucine amide. Residues 68–69 constitute a propeptide that is removed on maturation; that stretch reads EQ.

It belongs to the frog skin active peptide (FSAP) family. Dermaseptin subfamily. In terms of tissue distribution, expressed by the skin glands.

It localises to the secreted. Possesses a potent antimicrobial activity against Gram-positive and Gram-negative bacteria. Probably acts by disturbing membrane functions with its amphipathic structure. The protein is Dermaseptin-H3 of Pithecopus azureus (Orange-legged monkey tree frog).